The chain runs to 484 residues: Cytochrome P450 monooxygenase poxD (484 aa).

Residues Val2–Ser24 traverse the membrane as a helical segment. Cys429 contributes to the heme binding site.

This sequence belongs to the cytochrome P450 family. Heme is required as a cofactor.

The protein resides in the membrane. The protein operates within secondary metabolite biosynthesis. Its function is as follows. Cytochrome P450 monooxygenase; part of the gene cluster that mediates the biosynthesis of oxaleimides, cytotoxic compounds containing an unusual disubstituted succinimide moiety. The first step of the pathway is provided by the HR-PKS poxF that serves in a new mode of collaborative biosynthesis with the PKS-NRPS poxE, by providing the olefin containing amino acid substrate via the synthesis of an ACP-bound dec-4-enoate. The cytochrome P450 monooxygenase poxM-catalyzed oxidation at the alpha-position creates the enzyme-bound 2-hydroxydec-4-enoyl-ACP thioester, which may be prone to spontaneous hydrolysis to yield 2-hydroxydec-4-enoic acid due to increased electrophilicity of the carbonyl. 2-hydroxydec-4-enoic acid can then be further oxidized by poxM to yield the alpha-ketoacid 2-oxodec-4-enoicacid, which is reductively aminated by the aminotransferase poxL to yield (S,E)-2-aminodec-4-enoic acid. The Hybrid PKS-NRPS synthetase poxE then performs condensation between the octaketide product of its PKS modules and the amino group of (S,E)-2-aminodec-4-enoic acid which is activated and incorporated by the adenylation domain. The resulting aminoacyl product can be cyclized by the Diels-Alderase PoxQ and reductively released by the reductive (R) domain of poxE to yield an aldehyde intermediate. The released aldehyde is then substrate for a Knoevenagel condensation by the hydrolyase poxO followed by an oxidation at the 5-position of the pyrrolidone ring. The presence of the olefin from the amino acid building block allows for migration of the substituted allyl group to occur. This allylic transposition reaction takes place in a conjugate addition, semipinacol-like fashion to yield a succinimide intermediate. Iterative two-electron oxidations of the C7 methyl of the succinimide intermediate to the carboxylic acid can be catalyzed by one of two remaining cytochrome P450 monooxygenasess poxC or poxD to yield oxaleimide A. Subsequent oxidation yields the maleimide scaffold oxaleimide I. Both oxaleimide A and oxaleimide I can undergo oxidative modifications in the decalin ring to yield the series of products oxaleimides B to H. This chain is Cytochrome P450 monooxygenase poxD, found in Penicillium oxalicum.